Consider the following 636-residue polypeptide: Dehydrogenase ARMGADRAFT_1018426 (636 aa).

The N-terminal stretch at 1–19 (MPALTYLLLAAIGASTVHS) is a signal peptide. Residues 49–50 (TA) and 70–71 (EG) contribute to the FAD site. Residue Asn-99 is glycosylated (N-linked (GlcNAc...) asparagine). FAD-binding positions include Trp-104 and 134 to 137 (NGLT). Asn-253 is a glycosylation site (N-linked (GlcNAc...) asparagine). An FAD-binding site is contributed by Val-280. Residues Asn-333, Asn-380, Asn-394, and Asn-498 are each glycosylated (N-linked (GlcNAc...) asparagine). His-570 serves as the catalytic Proton acceptor. Residues Ala-603 and 614–615 (PS) contribute to the FAD site.

This sequence belongs to the GMC oxidoreductase family. FAD is required as a cofactor.

The protein operates within secondary metabolite biosynthesis. In terms of biological role, dehydrogenase, part of the gene cluster that mediates the biosynthesis of melleolides, a range of antifungal and phytotoxic polyketide derivatives composed of an orsellinic acid (OA) moiety esterified to various sesquiterpene alcohols. The first step in melleolides biosynthesis is performed by the delta(6)-protoilludene synthase PRO1 which catalyzes the cyclization of farnesyl diphosphate to protoilludene. The orsellinic acid synthase armB produces OA by condensing acetyl-CoA with 3 malonyl-CoA units in a three-round chain elongation reaction folowed by a C2-C7 ring closure. ArmB further catalyzes the trans-esterification of OA to the various sesquiterpene alcohols resulting from the hydroxylation of protoilludene. The melleolides cluster also includes 5 cytochrome P450 monooxygenases, 4 NAD(+)-dependent oxidoreductases, one flavin-dependent oxidoreductase, and one O-methyltransferase. The cytochrome P450 monooxygenases may be involved in protoilludene hydroxylation to elaborate melleolides with multiple alcohol groups, such as melleolide D, which carries alcohol functionalities at C-4, C-5, C-10, and C-13. The role of the NAD(+)-dependent enzymes remains unknown. Numerous melleolides, including arnamial, show 5'-O-methylation of the aromatic moiety which may be catalyzed by the methyltransferase encoded in the cluster. The flavin-dependent oxidoreductase might represent the dehydrogenase yielding the aldehyde in position 1 of arnamial and other melleolides. Finally, several halogenase localized outside of the cluster, are able to catalyze the transfer of a single chlorine atom to the melleolide backbone, resulting in a 6'-chloromelleolide product. The chain is Dehydrogenase ARMGADRAFT_1018426 from Armillaria gallica (Bulbous honey fungus).